A 513-amino-acid polypeptide reads, in one-letter code: uncharacterized protein (513 aa).

The protein belongs to the NodU/CmcH family.

This is an uncharacterized protein from Methanocaldococcus jannaschii (strain ATCC 43067 / DSM 2661 / JAL-1 / JCM 10045 / NBRC 100440) (Methanococcus jannaschii).